Consider the following 404-residue polypeptide: tRNA (carboxymethyluridine(34)-5-O)-methyltransferase (404 aa).

Ser-238 is subject to Phosphoserine.

Interacts with TRM112A and TRM112B.

It carries out the reaction 5-(carboxymethyl)uridine(34) in tRNA + S-adenosyl-L-methionine = 5-(2-methoxy-2-oxoethyl)uridine(34) in tRNA + S-adenosyl-L-homocysteine. Its function is as follows. Catalyzes the methylation of 5-carboxymethyl uridine to 5-methylcarboxymethyl uridine at the wobble position of the anticodon loop in tRNA via its methyltransferase domain. Catalyzes the last step in the formation of 5-methylcarboxymethyl uridine at the wobble position of the anticodon loop in target tRNA. The protein is tRNA (carboxymethyluridine(34)-5-O)-methyltransferase of Arabidopsis thaliana (Mouse-ear cress).